The sequence spans 116 residues: Large ribosomal subunit protein uL22 (116 aa).

The protein belongs to the universal ribosomal protein uL22 family. As to quaternary structure, part of the 50S ribosomal subunit.

This protein binds specifically to 23S rRNA; its binding is stimulated by other ribosomal proteins, e.g. L4, L17, and L20. It is important during the early stages of 50S assembly. It makes multiple contacts with different domains of the 23S rRNA in the assembled 50S subunit and ribosome. Functionally, the globular domain of the protein is located near the polypeptide exit tunnel on the outside of the subunit, while an extended beta-hairpin is found that lines the wall of the exit tunnel in the center of the 70S ribosome. The chain is Large ribosomal subunit protein uL22 from Orientia tsutsugamushi (strain Boryong) (Rickettsia tsutsugamushi).